An 815-amino-acid chain; its full sequence is G-type lectin S-receptor-like serine/threonine-protein kinase SD1-1 (815 aa).

Positions Met1–Ala22 are cleaved as a signal peptide. The Extracellular portion of the chain corresponds to Leu23–Glu438. The Bulb-type lectin domain occupies Tyr25–Asp152. N-linked (GlcNAc...) asparagine glycans are attached at residues Asn93, Asn249, and Asn265. Residues Pro288–Arg326 form the EGF-like domain. 2 cysteine pairs are disulfide-bonded: Cys292/Cys304 and Cys298/Cys314. N-linked (GlcNAc...) asparagine glycans are attached at residues Asn329 and Asn385. One can recognise a PAN domain in the interval Cys345 to Gly428. Disulfide bonds link Cys378/Cys403 and Cys382/Cys388. Residues Val439–Ala459 form a helical membrane-spanning segment. Over Cys460–Arg815 the chain is Cytoplasmic. In terms of domain architecture, Protein kinase spans Phe500–Gln783. ATP contacts are provided by residues Leu506 to Val514 and Lys528. Ser534 carries the post-translational modification Phosphoserine. Residues Arg589–Val606 form a caM-binding region. Asp625 (proton acceptor) is an active-site residue. Ser642 is modified (phosphoserine). Thr659 carries the phosphothreonine modification. Phosphoserine is present on residues Ser797 and Ser803. Thr810 carries the phosphothreonine modification.

The protein belongs to the protein kinase superfamily. Ser/Thr protein kinase family. Interacts with PUB9, PUB13 and PUB14.

The protein resides in the cell membrane. The enzyme catalyses L-seryl-[protein] + ATP = O-phospho-L-seryl-[protein] + ADP + H(+). The catalysed reaction is L-threonyl-[protein] + ATP = O-phospho-L-threonyl-[protein] + ADP + H(+). The polypeptide is G-type lectin S-receptor-like serine/threonine-protein kinase SD1-1 (SD11) (Arabidopsis thaliana (Mouse-ear cress)).